The primary structure comprises 447 residues: tRNA-2-methylthio-N(6)-dimethylallyladenosine synthase (447 aa).

An MTTase N-terminal domain is found at 10 to 128; it reads KLFCISTYGC…FPEYLHRVLQ (119 aa). [4Fe-4S] cluster-binding residues include Cys-19, Cys-55, Cys-89, Cys-165, Cys-169, and Cys-172. Residues 151–382 form the Radical SAM core domain; it reads RKSDVKAFVT…EAINKKVVIK (232 aa). Residues 384–447 form the TRAM domain; sequence KEYEGKVVEV…PFSLIGEIVE (64 aa).

The protein belongs to the methylthiotransferase family. MiaB subfamily. In terms of assembly, monomer. [4Fe-4S] cluster is required as a cofactor.

The protein resides in the cytoplasm. The enzyme catalyses N(6)-dimethylallyladenosine(37) in tRNA + (sulfur carrier)-SH + AH2 + 2 S-adenosyl-L-methionine = 2-methylsulfanyl-N(6)-dimethylallyladenosine(37) in tRNA + (sulfur carrier)-H + 5'-deoxyadenosine + L-methionine + A + S-adenosyl-L-homocysteine + 2 H(+). In terms of biological role, catalyzes the methylthiolation of N6-(dimethylallyl)adenosine (i(6)A), leading to the formation of 2-methylthio-N6-(dimethylallyl)adenosine (ms(2)i(6)A) at position 37 in tRNAs that read codons beginning with uridine. The chain is tRNA-2-methylthio-N(6)-dimethylallyladenosine synthase from Clostridium perfringens (strain ATCC 13124 / DSM 756 / JCM 1290 / NCIMB 6125 / NCTC 8237 / Type A).